The chain runs to 311 residues: Putative F-box protein At3g28280 (311 aa).

In terms of domain architecture, F-box spans 1–43 (MNSLPEDLLAMILVKLPIKIFTTFKIVCTQWESMVDSPYFRDL).

This chain is Putative F-box protein At3g28280, found in Arabidopsis thaliana (Mouse-ear cress).